The chain runs to 317 residues: Testis-specific Y-encoded protein 1 (317 aa).

Disordered stretches follow at residues 1–39 and 91–118; these read MSRP…FQVV and DEEQ…PGGP. Composition is skewed to basic and acidic residues over residues 15-26 and 95-112; these read QGQEERERRSEE and EQRP…EQGQ.

It belongs to the nucleosome assembly protein (NAP) family. In terms of processing, phosphorylated. In terms of tissue distribution, testis. Probably in spermatogonia.

It localises to the cytoplasm. It is found in the nucleus. Its function is as follows. May be involved in sperm differentiation and proliferation. This Bos taurus (Bovine) protein is Testis-specific Y-encoded protein 1 (TSPY1).